Consider the following 278-residue polypeptide: Insulin-like growth factor-binding protein-like 1 (278 aa).

Positions 1–25 are cleaved as a signal peptide; it reads MPRLSLLLPLLLLLLLPLLPPLSPS. The 76-residue stretch at 34-109 folds into the IGFBP N-terminal domain; the sequence is RRPKCGPCRP…PEGTGLCVCA (76 aa). Disulfide bonds link C38/C63, C41/C65, C46/C66, C52/C69, C77/C91, C85/C106, and C115/C151. The Kazal-like domain maps to 95-153; that stretch reads AAGAAPEGTGLCVCAQRGTVCGSDGRSYPSVCALRLRARHTPRAHPGHLHKARDGPCEF. The 105-residue stretch at 155 to 259 folds into the Ig-like C2-type domain; sequence PVVVVPPRSV…GEAESHSTVT (105 aa). N-linked (GlcNAc...) asparagine glycosylation occurs at N166. Cysteines 176 and 243 form a disulfide.

As to expression, expressed at the highest level in both brain and testis, with lower levels in the prostate, bladder and lung.

It is found in the secreted. In terms of biological role, IGF-binding proteins prolong the half-life of IGFs and have been shown to either inhibit or stimulate the growth promoting effects of the IGFs in cell culture. They alter the interaction of IGFs with their cell surface receptors. May be a putative tumor suppressor protein. This is Insulin-like growth factor-binding protein-like 1 (IGFBPL1) from Homo sapiens (Human).